Reading from the N-terminus, the 357-residue chain is RGG repeats nuclear RNA binding protein C (357 aa).

Ala2 carries the N-acetylalanine modification. A disordered region spans residues 25–232 (SQKVEKAAAA…AEEAEAREMT (208 aa)). The span at 31–45 (AAAAVQPPKAAKFPT) shows a compositional bias: low complexity. Gly residues-rich tracts occupy residues 63 to 82 (GGRGGTGGRGGFSRGRGNGG) and 114 to 128 (SRGGSVGGYRVGGGR). The span at 143–155 (DVERPPRNYDRHS) shows a compositional bias: basic and acidic residues. Gly residues predominate over residues 159–172 (HGTGMKRNGGGRGN). The span at 190–232 (EVEKSPVAEKQGGEDETPEAKKELTAEEKAQKEAEEAEAREMT) shows a compositional bias: basic and acidic residues. The FF domain occupies 239-299 (ILEEKKKALQ…KDATEKAKKS (61 aa)). The disordered stretch occupies residues 308 to 357 (PADGKRYNGRGGGSRGRGGRGGRGEGGNQRYAKEAAAPAIGDTAQFPSLG). Over residues 316–334 (GRGGGSRGRGGRGGRGEGG) the composition is skewed to gly residues. Ser355 carries the post-translational modification Phosphoserine.

It belongs to the SERBP1-HABP4 family.

Its subcellular location is the nucleus. It localises to the cytoplasm. The protein resides in the perinuclear region. Its function is as follows. Ribosome-binding protein that acts as a regulator of mRNA translation by promoting ribosome inactivation. Binds RNA. This Arabidopsis thaliana (Mouse-ear cress) protein is RGG repeats nuclear RNA binding protein C.